We begin with the raw amino-acid sequence, 65 residues long: Large ribosomal subunit protein bL33 (65 aa).

Residues 20 to 40 (VPPSEKRSPGVSRYTTEKNRR) are disordered.

The protein belongs to the bacterial ribosomal protein bL33 family.

The protein is Large ribosomal subunit protein bL33 of Prochlorococcus marinus (strain MIT 9211).